The chain runs to 553 residues: Cysteine desulfurase IscS (553 aa).

The span at 102 to 122 (NNISSNNTQYNNNSSNSGSLN) shows a compositional bias: low complexity. The interval 102–125 (NNISSNNTQYNNNSSNSGSLNDEG) is disordered.

Belongs to the class-V pyridoxal-phosphate-dependent aminotransferase family. NifS/IscS subfamily. In terms of assembly, homotetramer. Interacts with Isd11; the interaction enhances cysteine desulfurase activity of IscS. Interacts with IscU. Component of a complex, at least composed of IscS, Isd11 and IscU. Pyridoxal 5'-phosphate is required as a cofactor.

The protein resides in the mitochondrion. The catalysed reaction is (sulfur carrier)-H + L-cysteine = (sulfur carrier)-SH + L-alanine. It functions in the pathway cofactor biosynthesis; iron-sulfur cluster biosynthesis. Catalyzes sulfur activation and mobilization in iron-sulfur cluster formation (ISC) pathway for iron-sulfur (Fe-S) cluster biogenesis. Active when in complex with a partner protein Isd11. This is Cysteine desulfurase IscS from Plasmodium falciparum (isolate 3D7).